We begin with the raw amino-acid sequence, 296 residues long: Cell surface glycoprotein CD200 receptor 3 (296 aa).

Residues 1–25 form the signal peptide; the sequence is MHALGRTLALMLLIFITILVPESSC. Residues 26-245 are Extracellular-facing; it reads SVKGREEIPP…NRGTTSILPS (220 aa). An Ig-like V-type domain is found at 48–162; it reads PDGVGVTMEI…GIFQERHSIQ (115 aa). A disulfide bridge connects residues Cys75 and Cys146. In terms of domain architecture, Ig-like C2-type spans 151–232; it reads TDGIFQERHS…SHLTDNWILS (82 aa). Asn167 and Asn199 each carry an N-linked (GlcNAc...) asparagine glycan. Cysteines 172 and 220 form a disulfide. A helical membrane pass occupies residues 246 to 266; it reads LLSILYVKLAVTVLIVGFAFF. Topologically, residues 267–296 are cytoplasmic; the sequence is QKRNYFSSRDLVFMKERRSKRSVWQREALG.

Belongs to the CD200R family. In terms of assembly, isoform 3 interacts with TYROBP. Isoform 8 does not interact with TYROBP. Expressed in uterus and bone marrow-derived mast cells (at protein level). Expressed in uterus, spleen, bone marrow-derived dendritic, basophil and mast cells. Expressed in the lung of N.brasiliensis-infected mice. Weakly expressed in brain, testis, lung and thymus.

It is found in the membrane. Its function is as follows. According to PubMed:15187158 isoform 4 is a receptor for the CD200 cell surface glycoprotein. According to PubMed:16081818 isoform 4 is not a receptor for the CD200/OX2 cell surface glycoprotein. Isoform 1, isoform 2 and isoform 3 are involved in the recruitment or surface expression of the TYROBP receptor. Isoform 6, isoform 7 and isoform 8 are not involved in the recruitment or surface expression of the TYROBP receptor. The protein is Cell surface glycoprotein CD200 receptor 3 (Cd200r3) of Mus musculus (Mouse).